Here is a 359-residue protein sequence, read N- to C-terminus: Peptide chain release factor 1 (359 aa).

Position 234 is an N5-methylglutamine (Gln234). The interval 283 to 305 (SQKDAARAADRRAQVGSGDRSER) is disordered.

This sequence belongs to the prokaryotic/mitochondrial release factor family. In terms of processing, methylated by PrmC. Methylation increases the termination efficiency of RF1.

Its subcellular location is the cytoplasm. Peptide chain release factor 1 directs the termination of translation in response to the peptide chain termination codons UAG and UAA. The sequence is that of Peptide chain release factor 1 from Methylobacterium sp. (strain 4-46).